Here is a 442-residue protein sequence, read N- to C-terminus: 26S proteasome regulatory subunit 6A (442 aa).

Residue serine 12 is modified to Phosphoserine. Residue 230–237 (GPPGTGKT) coordinates ATP. The residue at position 379 (serine 379) is a Phosphoserine.

This sequence belongs to the AAA ATPase family. Component of the 19S proteasome regulatory particle complex. The 26S proteasome consists of a 20S core particle (CP) and two 19S regulatory subunits (RP). The regulatory particle is made of a lid composed of 9 subunits, a base containing 6 ATPases including PSMC3 and few additional components. Interacts with PAAF1.

The protein localises to the cytoplasm. It localises to the nucleus. Component of the 26S proteasome, a multiprotein complex involved in the ATP-dependent degradation of ubiquitinated proteins. This complex plays a key role in the maintenance of protein homeostasis by removing misfolded or damaged proteins, which could impair cellular functions, and by removing proteins whose functions are no longer required. Therefore, the proteasome participates in numerous cellular processes, including cell cycle progression, apoptosis, or DNA damage repair. PSMC3 belongs to the heterohexameric ring of AAA (ATPases associated with diverse cellular activities) proteins that unfolds ubiquitinated target proteins that are concurrently translocated into a proteolytic chamber and degraded into peptides. This is 26S proteasome regulatory subunit 6A (Psmc3) from Mus musculus (Mouse).